The chain runs to 233 residues: Adenosylcobinamide-GDP ribazoletransferase (233 aa).

Helical transmembrane passes span 24-44 (LWAF…VLYL), 46-66 (LPLS…LLHL), 96-116 (IAGL…LQLV), 117-137 (PFYA…LALA), 156-176 (SGQL…VVVY), 184-204 (LLGL…FGGI), and 209-229 (IGAI…FAGA).

This sequence belongs to the CobS family. Mg(2+) is required as a cofactor.

It localises to the cell membrane. The enzyme catalyses alpha-ribazole + adenosylcob(III)inamide-GDP = adenosylcob(III)alamin + GMP + H(+). It catalyses the reaction alpha-ribazole 5'-phosphate + adenosylcob(III)inamide-GDP = adenosylcob(III)alamin 5'-phosphate + GMP + H(+). Its pathway is cofactor biosynthesis; adenosylcobalamin biosynthesis; adenosylcobalamin from cob(II)yrinate a,c-diamide: step 7/7. Functionally, joins adenosylcobinamide-GDP and alpha-ribazole to generate adenosylcobalamin (Ado-cobalamin). Also synthesizes adenosylcobalamin 5'-phosphate from adenosylcobinamide-GDP and alpha-ribazole 5'-phosphate. The sequence is that of Adenosylcobinamide-GDP ribazoletransferase from Thermococcus onnurineus (strain NA1).